A 98-amino-acid polypeptide reads, in one-letter code: Large ribosomal subunit protein uL23 (98 aa).

Belongs to the universal ribosomal protein uL23 family. Part of the 50S ribosomal subunit. Contacts protein L29, and trigger factor when it is bound to the ribosome.

One of the early assembly proteins it binds 23S rRNA. One of the proteins that surrounds the polypeptide exit tunnel on the outside of the ribosome. Forms the main docking site for trigger factor binding to the ribosome. This Maricaulis maris (strain MCS10) (Caulobacter maris) protein is Large ribosomal subunit protein uL23.